The primary structure comprises 150 residues: Ubiquitin-conjugating enzyme E2 3 (150 aa).

The 147-residue stretch at 4-150 (PAKKRLMWDF…VIEIVEQSYV (147 aa)) folds into the UBC core domain. C88 serves as the catalytic Glycyl thioester intermediate.

Belongs to the ubiquitin-conjugating enzyme family. Expressed in all tissues examined. Lower levels found in leaves.

The catalysed reaction is S-ubiquitinyl-[E1 ubiquitin-activating enzyme]-L-cysteine + [E2 ubiquitin-conjugating enzyme]-L-cysteine = [E1 ubiquitin-activating enzyme]-L-cysteine + S-ubiquitinyl-[E2 ubiquitin-conjugating enzyme]-L-cysteine.. It participates in protein modification; protein ubiquitination. Accepts the ubiquitin from the E1 complex and catalyzes its covalent attachment to other proteins. This Arabidopsis thaliana (Mouse-ear cress) protein is Ubiquitin-conjugating enzyme E2 3 (UBC3).